Reading from the N-terminus, the 196-residue chain is dCTP deaminase (196 aa).

DCTP-binding positions include 113–118, Asp-131, 139–141, Tyr-174, Lys-181, and Gln-185; these read RSSLAR and VLE. The Proton donor/acceptor role is filled by Glu-141.

This sequence belongs to the dCTP deaminase family. Homotrimer.

The catalysed reaction is dCTP + H2O + H(+) = dUTP + NH4(+). Its pathway is pyrimidine metabolism; dUMP biosynthesis; dUMP from dCTP (dUTP route): step 1/2. Functionally, catalyzes the deamination of dCTP to dUTP. This is dCTP deaminase from Wigglesworthia glossinidia brevipalpis.